The primary structure comprises 87 residues: Anaphase-promoting complex subunit 11 (87 aa).

The segment at 35 to 77 (CVDCKIPGDDCPPVWGVCNHAFHMHCILKWLNANELQQCPMCR) adopts an RING-type; atypical zinc-finger fold.

It belongs to the RING-box family. In terms of assembly, the APC/C is composed of at least 13 subunits that stay tightly associated throughout the cell cycle: anapc1, anapc2, anapc3, anapc4, anapc5, anapc6, anapc7, anapc8, anapc10, anapc11, cdc20, cdc26 and cdh1.

The protein resides in the nucleus. It functions in the pathway protein modification; protein ubiquitination. Its function is as follows. Component of the anaphase promoting complex/cyclosome (APC/C), a cell cycle-regulated E3 ubiquitin-protein ligase complex that controls progression through mitosis and the G1 phase of the cell cycle. The protein is Anaphase-promoting complex subunit 11 (anapc11) of Dictyostelium discoideum (Social amoeba).